Reading from the N-terminus, the 584-residue chain is Pescadillo homolog (584 aa).

The tract at residues 1–54 (MGGLEKKKYERGSATNYITRNKARKKLQLSLPDFRRLCILKGIYPHEPKHKKKV) is required for 28S ribosomal RNA processing. The sufficient for nucleolar localization stretch occupies residues 1–257 (MGGLEKKKYE…PKLEGQAQAE (257 aa)). The residue at position 98 (Lys98) is an N6-acetyllysine. The tract at residues 312 to 414 (RKKELEAQEK…LLLPVAEYFP (103 aa)) is sufficient for interaction with MAP1B. The BRCT domain maps to 321 to 414 (KHKKLFEGLK…LLLPVAEYFP (94 aa)). Residues 449–510 (DPGHLEEEEE…EEKKPQVMAG (62 aa)) form a disordered region. Over residues 454 to 489 (EEEEEEDEDDDNEGDVAAENEEEDVEVESEEEEEEE) the composition is skewed to acidic residues. The span at 496-505 (EQHRLEEKKP) shows a compositional bias: basic and acidic residues. Lys513 participates in a covalent cross-link: Glycyl lysine isopeptide (Lys-Gly) (interchain with G-Cter in SUMO1); alternate. Lys513 participates in a covalent cross-link: Glycyl lysine isopeptide (Lys-Gly) (interchain with G-Cter in SUMO2); alternate. The interval 535–584 (MMKKREKYLYQKIMFGKRRKIREANKLAEKRKAHDDAVRSEKKAKRTRPV) is required for 28S ribosomal RNA processing. The span at 560 to 575 (KLAEKRKAHDDAVRSE) shows a compositional bias: basic and acidic residues. Positions 560–584 (KLAEKRKAHDDAVRSEKKAKRTRPV) are disordered.

The protein belongs to the pescadillo family. In terms of assembly, component of the PeBoW complex, composed of BOP1, PES1 and WDR12. The complex is held together by BOP1, which interacts with PES1 via its N-terminal domain and with WDR12 via a high-affinity interaction between the seven-bladed beta-propeller domains of the 2 proteins. The PeBoW complex associates with the 66S pre-ribosome. The PeBoW complex also associates with DDX27, PES1 interacts directly with DDX27. Interacts with IRS1 and UBTF. May interact with MAP1B. Post-translationally, sumoylated. As to expression, ubiquitous. Highest levels appear to be found in tissues that contain a population of proliferating cells, such as ovary and testis. Also appears to be highly expressed in kidney and liver. In the brain expression is restricted to neural progenitor cells and postmitotic neurons. Highly expressed in malignant astrocytes.

It is found in the nucleus. It localises to the nucleolus. The protein resides in the nucleoplasm. The protein localises to the chromosome. Its function is as follows. Component of the PeBoW complex, which is required for maturation of 28S and 5.8S ribosomal RNAs and formation of the 60S ribosome. This is Pescadillo homolog (Pes1) from Mus musculus (Mouse).